Reading from the N-terminus, the 49-residue chain is Light-harvesting protein B-875 beta chain (49 aa).

At 2–27 (ADKSDLGYTGLTDEQAQELHSVYMSG) the chain is on the cytoplasmic side. A bacteriochlorophyll contacts are provided by H21 and H39. A helical; Signal-anchor for type II membrane protein transmembrane segment spans residues 28 to 45 (LWPFSAVAIVAHLAVYIW). Residues 46 to 49 (RPWF) are Periplasmic-facing.

The protein belongs to the antenna complex beta subunit family. As to quaternary structure, the core complex is formed by different alpha and beta chains, binding bacteriochlorophyll molecules, and arranged most probably in tetrameric structures disposed around the reaction center. The non-pigmented gamma chains may constitute additional components.

It is found in the cell inner membrane. Functionally, antenna complexes are light-harvesting systems, which transfer the excitation energy to the reaction centers. The protein is Light-harvesting protein B-875 beta chain (pufB) of Cereibacter sphaeroides (Rhodobacter sphaeroides).